A 152-amino-acid polypeptide reads, in one-letter code: uncharacterized protein (152 aa).

This is an uncharacterized protein from Methanocaldococcus jannaschii (strain ATCC 43067 / DSM 2661 / JAL-1 / JCM 10045 / NBRC 100440) (Methanococcus jannaschii).